The sequence spans 219 residues: MKQEKAIVVFSGGQDSTTCLLWALRQFQEVEAVTFQYNQRHKQEIEVAKKIAAKLGVKHHLLDMELLNQLAPNALTRDDIEIEAKEGELPSTFVPGRNLVFLSFASILAYQVGARHIITGVCETDFSGYPDCRDEFVKSCNVTVNLAMERPFVIHTPLMWLNKAETWELADELDALDFVKNETLTCYNGIIADGCGECPACKLRANGYNEYMKMKKERA.

Position 10–20 (10–20) interacts with ATP; it reads FSGGQDSTTCL. Residues C186, C195, C198, and C201 each contribute to the Zn(2+) site.

The protein belongs to the QueC family. Homodimer. It depends on Zn(2+) as a cofactor.

The enzyme catalyses 7-carboxy-7-deazaguanine + NH4(+) + ATP = 7-cyano-7-deazaguanine + ADP + phosphate + H2O + H(+). It functions in the pathway purine metabolism; 7-cyano-7-deazaguanine biosynthesis. Functionally, catalyzes the ATP-dependent conversion of 7-carboxy-7-deazaguanine (CDG) to 7-cyano-7-deazaguanine (preQ(0)). This is 7-cyano-7-deazaguanine synthase from Bacillus licheniformis (strain ATCC 14580 / DSM 13 / JCM 2505 / CCUG 7422 / NBRC 12200 / NCIMB 9375 / NCTC 10341 / NRRL NRS-1264 / Gibson 46).